The chain runs to 306 residues: tRNA pseudouridine synthase B (306 aa).

Catalysis depends on Asp-47, which acts as the Nucleophile.

The protein belongs to the pseudouridine synthase TruB family. Type 1 subfamily.

It carries out the reaction uridine(55) in tRNA = pseudouridine(55) in tRNA. Functionally, responsible for synthesis of pseudouridine from uracil-55 in the psi GC loop of transfer RNAs. The polypeptide is tRNA pseudouridine synthase B (Neisseria gonorrhoeae (strain ATCC 700825 / FA 1090)).